A 282-amino-acid chain; its full sequence is 4-hydroxy-3-methylbut-2-enyl diphosphate reductase (282 aa).

A [4Fe-4S] cluster-binding site is contributed by Cys-12. Residues His-40 and His-72 each contribute to the (2E)-4-hydroxy-3-methylbut-2-enyl diphosphate site. Dimethylallyl diphosphate-binding residues include His-40 and His-72. Positions 40 and 72 each coordinate isopentenyl diphosphate. Cys-94 contacts [4Fe-4S] cluster. Position 122 (His-122) interacts with (2E)-4-hydroxy-3-methylbut-2-enyl diphosphate. A dimethylallyl diphosphate-binding site is contributed by His-122. His-122 is an isopentenyl diphosphate binding site. The active-site Proton donor is Glu-124. Thr-160 lines the (2E)-4-hydroxy-3-methylbut-2-enyl diphosphate pocket. Cys-188 serves as a coordination point for [4Fe-4S] cluster. (2E)-4-hydroxy-3-methylbut-2-enyl diphosphate-binding residues include Ser-216, Asn-218, and Ser-260. 3 residues coordinate dimethylallyl diphosphate: Ser-216, Asn-218, and Ser-260. Residues Ser-216, Asn-218, and Ser-260 each coordinate isopentenyl diphosphate.

This sequence belongs to the IspH family. [4Fe-4S] cluster is required as a cofactor.

The enzyme catalyses isopentenyl diphosphate + 2 oxidized [2Fe-2S]-[ferredoxin] + H2O = (2E)-4-hydroxy-3-methylbut-2-enyl diphosphate + 2 reduced [2Fe-2S]-[ferredoxin] + 2 H(+). The catalysed reaction is dimethylallyl diphosphate + 2 oxidized [2Fe-2S]-[ferredoxin] + H2O = (2E)-4-hydroxy-3-methylbut-2-enyl diphosphate + 2 reduced [2Fe-2S]-[ferredoxin] + 2 H(+). The protein operates within isoprenoid biosynthesis; dimethylallyl diphosphate biosynthesis; dimethylallyl diphosphate from (2E)-4-hydroxy-3-methylbutenyl diphosphate: step 1/1. It functions in the pathway isoprenoid biosynthesis; isopentenyl diphosphate biosynthesis via DXP pathway; isopentenyl diphosphate from 1-deoxy-D-xylulose 5-phosphate: step 6/6. Functionally, catalyzes the conversion of 1-hydroxy-2-methyl-2-(E)-butenyl 4-diphosphate (HMBPP) into a mixture of isopentenyl diphosphate (IPP) and dimethylallyl diphosphate (DMAPP). Acts in the terminal step of the DOXP/MEP pathway for isoprenoid precursor biosynthesis. The sequence is that of 4-hydroxy-3-methylbut-2-enyl diphosphate reductase from Geotalea uraniireducens (strain Rf4) (Geobacter uraniireducens).